The chain runs to 311 residues: MQRFIKWLAVITSLDLLIVLLGGALVTKTGSGQGCGKSWPLCNGEFVPSNLSMETIIELSHRLTSGSAGILVTLLCILSWKYYKHVRETKTLAILSFVFLVAQALMGAAAVVWGQMPAVLAIHFGISLISFASVILLTCLIFEIDQKFDARSLIMDKKMKFHIYGVTIYSYIVVYTGALVRHERASLACPDFPLCSKNRPMPTQLHEWVQMGHRVAAMLIFAWILYAMILAIRHYKQQPVVYWGWIISFILVTLQAIVGILVVFTNASLSMALLHSLFISCLFAVLCYLVMLGTRSKVNAKEAASTSKQTK.

The Cytoplasmic portion of the chain corresponds to 1–6 (MQRFIK). A helical transmembrane segment spans residues 7 to 27 (WLAVITSLDLLIVLLGGALVT). The Extracellular portion of the chain corresponds to 28 to 62 (KTGSGQGCGKSWPLCNGEFVPSNLSMETIIELSHR). Cysteines 35 and 42 form a disulfide. Glutamate 58 is a catalytic residue. Residue histidine 61 coordinates heme o. A helical transmembrane segment spans residues 63-83 (LTSGSAGILVTLLCILSWKYY). The Cytoplasmic segment spans residues 84–91 (KHVRETKT). A helical membrane pass occupies residues 92 to 112 (LAILSFVFLVAQALMGAAAVV). Topologically, residues 113-121 (WGQMPAVLA) are extracellular. A helical membrane pass occupies residues 122–142 (IHFGISLISFASVILLTCLIF). Histidine 123 contacts heme o. The Cytoplasmic segment spans residues 143–159 (EIDQKFDARSLIMDKKM). Residues 160–180 (KFHIYGVTIYSYIVVYTGALV) traverse the membrane as a helical segment. Over 181-211 (RHERASLACPDFPLCSKNRPMPTQLHEWVQM) the chain is Extracellular. Cysteine 189 and cysteine 195 are joined by a disulfide. Residues 212–232 (GHRVAAMLIFAWILYAMILAI) form a helical membrane-spanning segment. Histidine 213 contacts heme b. At 233–243 (RHYKQQPVVYW) the chain is on the cytoplasmic side. The chain crosses the membrane as a helical span at residues 244 to 264 (GWIISFILVTLQAIVGILVVF). The Extracellular portion of the chain corresponds to 265 to 271 (TNASLSM). A helical transmembrane segment spans residues 272-292 (ALLHSLFISCLFAVLCYLVML). Histidine 275 is a binding site for heme b. Topologically, residues 293-311 (GTRSKVNAKEAASTSKQTK) are cytoplasmic.

The protein belongs to the COX15/CtaA family. Type 1 subfamily. Interacts with CtaB. The cofactor is heme b.

It localises to the cell membrane. The enzyme catalyses Fe(II)-heme o + 2 A + H2O = Fe(II)-heme a + 2 AH2. The protein operates within porphyrin-containing compound metabolism; heme A biosynthesis; heme A from heme O: step 1/1. In terms of biological role, catalyzes the conversion of heme O to heme A by two successive hydroxylations of the methyl group at C8. The first hydroxylation forms heme I, the second hydroxylation results in an unstable dihydroxymethyl group, which spontaneously dehydrates, resulting in the formyl group of heme A. This chain is Heme A synthase, found in Bacillus cereus (strain ATCC 10987 / NRS 248).